Consider the following 657-residue polypeptide: Glycogen debranching enzyme (657 aa).

D334 (nucleophile) is an active-site residue. E369 acts as the Proton donor in catalysis. Residues 458-485 are disordered; it reads ANGEQNRDGTNSNFSFNHGTEGLEADET. Positions 465–475 are enriched in polar residues; that stretch reads DGTNSNFSFNH.

The protein belongs to the glycosyl hydrolase 13 family.

The protein localises to the cytoplasm. The enzyme catalyses Hydrolysis of (1-&gt;6)-alpha-D-glucosidic linkages to branches with degrees of polymerization of three or four glucose residues in limit dextrin.. It functions in the pathway glycan degradation; glycogen degradation. Slightly activated by Ca(2+). Inhibited by divalent cations such as Zn(2+), Cu(2+), Fe(2+), Mg(2+), Mn(2+), but only slightly inhibited by EDTA. Removes maltotriose and maltotetraose chains that are attached by 1,6-alpha-linkage to the limit dextrin main chain, generating a debranched limit dextrin. Hydrolyzes the alpha-1,6-glycosidic linkages in amylopectin while does not hydrolyze the alpha-1,4-glycosidic linkages in amylose. Native glycogen is a poor substrate. The protein is Glycogen debranching enzyme of Dickeya chrysanthemi (Pectobacterium chrysanthemi).